The primary structure comprises 461 residues: Bifunctional protein GlmU (461 aa).

Positions 1-234 are pyrophosphorylase; the sequence is MSLSVVILAA…EIEVEGANNR (234 aa). UDP-N-acetyl-alpha-D-glucosamine-binding positions include 8–11, Lys-22, Gln-77, 82–83, 104–106, Gly-141, Glu-159, Asn-174, and Asn-232; these read LAAG, GT, and YGD. Residue Asp-106 participates in Mg(2+) binding. Asn-232 lines the Mg(2+) pocket. The segment at 235-255 is linker; the sequence is VQLATLERAYQARIAEELMIA. The N-acetyltransferase stretch occupies residues 256-461; sequence GASLRDPARI…AGWQRPVKKS (206 aa). Positions 338 and 356 each coordinate UDP-N-acetyl-alpha-D-glucosamine. The active-site Proton acceptor is His-368. UDP-N-acetyl-alpha-D-glucosamine-binding residues include Tyr-371 and Asn-382. Residues Ala-385, 391 to 392, Ser-410, Ala-428, and Arg-445 each bind acetyl-CoA; that span reads NY.

It in the N-terminal section; belongs to the N-acetylglucosamine-1-phosphate uridyltransferase family. In the C-terminal section; belongs to the transferase hexapeptide repeat family. Homotrimer. Requires Mg(2+) as cofactor.

The protein localises to the cytoplasm. It catalyses the reaction alpha-D-glucosamine 1-phosphate + acetyl-CoA = N-acetyl-alpha-D-glucosamine 1-phosphate + CoA + H(+). The catalysed reaction is N-acetyl-alpha-D-glucosamine 1-phosphate + UTP + H(+) = UDP-N-acetyl-alpha-D-glucosamine + diphosphate. It functions in the pathway nucleotide-sugar biosynthesis; UDP-N-acetyl-alpha-D-glucosamine biosynthesis; N-acetyl-alpha-D-glucosamine 1-phosphate from alpha-D-glucosamine 6-phosphate (route II): step 2/2. It participates in nucleotide-sugar biosynthesis; UDP-N-acetyl-alpha-D-glucosamine biosynthesis; UDP-N-acetyl-alpha-D-glucosamine from N-acetyl-alpha-D-glucosamine 1-phosphate: step 1/1. Its pathway is bacterial outer membrane biogenesis; LPS lipid A biosynthesis. Its function is as follows. Catalyzes the last two sequential reactions in the de novo biosynthetic pathway for UDP-N-acetylglucosamine (UDP-GlcNAc). The C-terminal domain catalyzes the transfer of acetyl group from acetyl coenzyme A to glucosamine-1-phosphate (GlcN-1-P) to produce N-acetylglucosamine-1-phosphate (GlcNAc-1-P), which is converted into UDP-GlcNAc by the transfer of uridine 5-monophosphate (from uridine 5-triphosphate), a reaction catalyzed by the N-terminal domain. This Colwellia psychrerythraea (strain 34H / ATCC BAA-681) (Vibrio psychroerythus) protein is Bifunctional protein GlmU.